The following is a 133-amino-acid chain: Small ribosomal subunit protein eS8 (133 aa).

The segment at methionine 1–glutamate 34 is disordered.

The protein belongs to the eukaryotic ribosomal protein eS8 family. Part of the 30S ribosomal subunit.

This chain is Small ribosomal subunit protein eS8, found in Methanopyrus kandleri (strain AV19 / DSM 6324 / JCM 9639 / NBRC 100938).